Consider the following 175-residue polypeptide: Lipopolysaccharide export system protein LptH (175 aa).

The N-terminal stretch at 1 to 24 (MRFVNTLPLIFGLTAALGSSMALA) is a signal peptide.

This sequence belongs to the LptA family. As to quaternary structure, component of the lipopolysaccharide transport and assembly complex. Mainly exists as a dimer in solution. Tends to oligomerize already in solution. The protomers follow one another in a head-to-tail fashion throughout the crystal lattice, yielding a continuous fiber arrangement.

It is found in the periplasm. Functionally, involved in the assembly of lipopolysaccharide (LPS). Required for the translocation of LPS from the inner membrane to the outer membrane. May form a bridge between the inner membrane and the outer membrane, via interactions with LptC and LptD, thereby facilitating LPS transfer across the periplasm. Binds LPS. Important for cell envelope stability and essential for growth, cell viability and ability to cause infection in different animal models. The chain is Lipopolysaccharide export system protein LptH from Pseudomonas aeruginosa (strain ATCC 15692 / DSM 22644 / CIP 104116 / JCM 14847 / LMG 12228 / 1C / PRS 101 / PAO1).